The following is a 698-amino-acid chain: MKNKGIDQFRVIAAMMVVAIHCLPLHYLWPEGDILITLTIFRVAVPFFFMISGYYVFAELAVANSYPSRQRVFNFIKKQLKVYLLATLMFLPLALYSQTIGFDLPVGTLVQVLLVNGILYHLWYFPALITGSLLLTSLLIHVSFKKVFWLAAGLYLIGLGGDSWFGLIQQTPIEPFYTAVFHLLDGTRNGIFFTPLFLCLGVLVRKQSEKRSLSKTALFFLISLIGLLIESAYLHGFSIPKHDSMYLFLPVVLFFLFPLILRWHPHRTWKHPGQLSLWLYLLHPYTIAGTHFLSQKISILQNNLINYLVVLILTIGFICLFLRQKHSWFRHKQTTPVKRAVKEFSKTALLHNLQEIQRIISPKTKVMAVVKADAYGCGAKEVAPVLEQAGIDFFAVATIDEGIRLRKNAVKSPILVLGYTSPKRIKELRRYSLTQSIISEGHAVALSQRKVAIDCHLAIDTGMHRLGVTPTIDSILSIFDLPFLTISGVYSHLGSADRLNPDSMIRTQKQIACFDQILLELDQRQISYGITHLQSSYGILNYPDLNYDYVRPGILLTGSLSDTNEPTKQRVSLQPILTLKAQLITKRVVAKGEAIGYGQTAVANQETTVGVVSIGYCDGLPRSLSNQEFCLSYRGQSLPQIGLICMDMLLIDLSHCPTIPIESEIEILTDWSDTAEQVQTITNELICRIGPRVSARIK.

The Cytoplasmic portion of the chain corresponds to Met-1–Arg-10. Residues Val-11–Glu-31 traverse the membrane as a helical segment. The Extracellular portion of the chain corresponds to Gly-32–Arg-42. A helical membrane pass occupies residues Val-43 to Ala-63. The Cytoplasmic segment spans residues Asn-64–Lys-81. Residues Val-82–Phe-102 traverse the membrane as a helical segment. The Extracellular portion of the chain corresponds to Asp-103–His-121. Residues Leu-122–Val-142 form a helical membrane-spanning segment. Topologically, residues Ser-143–Val-147 are cytoplasmic. The helical transmembrane segment at Phe-148–Ile-168 threads the bilayer. Residues Gln-169 to Leu-183 are Extracellular-facing. Residues Leu-184 to Val-204 form a helical membrane-spanning segment. At Arg-205–Thr-216 the chain is on the cytoplasmic side. A helical transmembrane segment spans residues Ala-217–Phe-237. Residues Ser-238–Ser-244 lie on the Extracellular side of the membrane. A helical transmembrane segment spans residues Met-245 to Pro-265. Residues His-266–Gln-274 are Cytoplasmic-facing. The chain crosses the membrane as a helical span at residues Leu-275 to Gln-295. The Extracellular portion of the chain corresponds to Lys-296–Gln-301. A helical membrane pass occupies residues Asn-302–Leu-322. Topologically, residues Arg-323–Lys-698 are cytoplasmic. Residues Lys-332–Lys-698 are racemase. Catalysis depends on Lys-371, which acts as the Proton acceptor. Position 371 is an N6-(pyridoxal phosphate)lysine (Lys-371). Arg-465 is a substrate binding site. The active-site Proton acceptor is Tyr-597. Position 646 (Met-646) interacts with substrate.

In the N-terminal section; belongs to the acyltransferase 3 family. The protein in the C-terminal section; belongs to the alanine racemase family. Homodimer. Requires pyridoxal 5'-phosphate as cofactor.

The protein localises to the cell membrane. The enzyme catalyses L-alanine = D-alanine. The catalysed reaction is L-serine = D-serine. Its pathway is amino-acid biosynthesis; D-alanine biosynthesis; D-alanine from L-alanine: step 1/1. Its function is as follows. Catalyzes the interconversion of L-serine and D-serine, and L-alanine and D-alanine. L-alanine is racemized at a rate that is 14% of that of L-serine. Together with VanC/VanC1 and VanXYC, required for vancomycin resistance in E.gallinarum strain BM4174. The sequence is that of Serine/alanine racemase from Enterococcus gallinarum.